A 91-amino-acid chain; its full sequence is Envelope glycoprotein N (91 aa).

Positions 1-23 (MGPPRRVCRAGLLFVLLVALAAG) are cleaved as a signal peptide. The interval 23–48 (GDAGPRGEPPGEEGGRDGIGGARCET) is disordered. The Virion surface portion of the chain corresponds to 24 to 55 (DAGPRGEPPGEEGGRDGIGGARCETQNTGQMS). A helical transmembrane segment spans residues 56–76 (APGALVPFYVGMASMGVCIIA). At 77–91 (HVCQICQRLLAAGHA) the chain is on the intravirion side.

The protein belongs to the herpesviridae glycoprotein N family. In terms of assembly, interacts (via N-terminus) with gM (via N-terminus). The gM-gN heterodimer forms the gCII complex.

It localises to the virion membrane. Its subcellular location is the host membrane. The protein resides in the host Golgi apparatus. The protein localises to the host trans-Golgi network. Functionally, envelope glycoprotein necessary for proper maturation of gM and modulation of its membrane fusion activity. Also plays a critical role in virion morphogenesis. The chain is Envelope glycoprotein N from Homo sapiens (Human).